A 210-amino-acid chain; its full sequence is MGRGKIEIKRIENSSNRQVTYSKRRNGILKKAKEISVLCDARVSVIIFASSGKMHEFSSTSLVDILDQYHKLTGRRLLDAKHENLDNEINKVKKDNDNMQIELRHLKGEDITSLNHRELMILEDALENGLTSIRNKQNEVLRMMRKKTQSMEEEQDQLNCQLRQLEIATMNRNMGEIGEVFQQRENHDYQNHMPFAFRVQPMQPNLQERL.

The region spanning 3–57 (RGKIEIKRIENSSNRQVTYSKRRNGILKKAKEISVLCDARVSVIIFASSGKMHEF) is the MADS-box domain. Residues 82–173 (HENLDNEINK…QLEIATMNRN (92 aa)) enclose the K-box domain.

In terms of tissue distribution, petals.

The protein localises to the nucleus. In terms of biological role, probable transcription factor. This Petunia hybrida (Petunia) protein is Floral homeotic protein FBP1 (FBP1).